Here is a 57-residue protein sequence, read N- to C-terminus: Large ribosomal subunit protein bL33 (57 aa).

It belongs to the bacterial ribosomal protein bL33 family.

The chain is Large ribosomal subunit protein bL33 from Bifidobacterium longum (strain NCC 2705).